The chain runs to 216 residues: Probable GTP-binding protein EngB (216 aa).

Residues 43 to 216 form the EngB-type G domain; that stretch reads DRLEVCFAGR…TLRSIITDLT (174 aa). Residues 51 to 58, 78 to 82, 96 to 99, 163 to 166, and 197 to 199 each bind GTP; these read GRSNVGKS, GRTQE, DLPG, TKAD, and TSS. Mg(2+) contacts are provided by Ser58 and Thr80.

Belongs to the TRAFAC class TrmE-Era-EngA-EngB-Septin-like GTPase superfamily. EngB GTPase family. Requires Mg(2+) as cofactor.

Necessary for normal cell division and for the maintenance of normal septation. This Roseobacter denitrificans (strain ATCC 33942 / OCh 114) (Erythrobacter sp. (strain OCh 114)) protein is Probable GTP-binding protein EngB.